A 196-amino-acid chain; its full sequence is Aliphatic amidase regulator (196 aa).

Residues 129-190 form the ANTAR domain; sequence MAKLKQKTEQ…PILKIAQELL (62 aa).

As to quaternary structure, forms a complex with AmiC.

Its function is as follows. Positive controlling element of AmiE, the gene for aliphatic amidase. Acts as a transcriptional antitermination factor. It is thought to allow RNA polymerase read through a rho-independent transcription terminator between the AmiE promoter and gene. The polypeptide is Aliphatic amidase regulator (amiR) (Pseudomonas aeruginosa (strain ATCC 15692 / DSM 22644 / CIP 104116 / JCM 14847 / LMG 12228 / 1C / PRS 101 / PAO1)).